The primary structure comprises 94 residues: Aspartyl/glutamyl-tRNA(Asn/Gln) amidotransferase subunit C (94 aa).

It belongs to the GatC family. Heterotrimer of A, B and C subunits.

It catalyses the reaction L-glutamyl-tRNA(Gln) + L-glutamine + ATP + H2O = L-glutaminyl-tRNA(Gln) + L-glutamate + ADP + phosphate + H(+). The catalysed reaction is L-aspartyl-tRNA(Asn) + L-glutamine + ATP + H2O = L-asparaginyl-tRNA(Asn) + L-glutamate + ADP + phosphate + 2 H(+). In terms of biological role, allows the formation of correctly charged Asn-tRNA(Asn) or Gln-tRNA(Gln) through the transamidation of misacylated Asp-tRNA(Asn) or Glu-tRNA(Gln) in organisms which lack either or both of asparaginyl-tRNA or glutaminyl-tRNA synthetases. The reaction takes place in the presence of glutamine and ATP through an activated phospho-Asp-tRNA(Asn) or phospho-Glu-tRNA(Gln). This is Aspartyl/glutamyl-tRNA(Asn/Gln) amidotransferase subunit C from Heliobacterium modesticaldum (strain ATCC 51547 / Ice1).